An 80-amino-acid chain; its full sequence is Cell division activator CedA (80 aa).

Belongs to the CedA family.

In terms of biological role, activates the cell division inhibited by chromosomal DNA over-replication. This chain is Cell division activator CedA, found in Escherichia coli O1:K1 / APEC.